The chain runs to 307 residues: Oxygen-dependent coproporphyrinogen-III oxidase (307 aa).

Ser-94 is a substrate binding site. The a divalent metal cation site is built by His-98 and His-108. Catalysis depends on His-108, which acts as the Proton donor. 110-112 contributes to the substrate binding site; the sequence is NVR. Residues His-147 and His-177 each coordinate a divalent metal cation. Residues 242 to 277 are important for dimerization; that stretch reads YVEFNLVWDRGTLFGLQSGGRTESILMSMPPLAQWQ. 260–262 is a binding site for substrate; that stretch reads GGR.

This sequence belongs to the aerobic coproporphyrinogen-III oxidase family. Homodimer. The cofactor is a divalent metal cation.

The protein localises to the cytoplasm. It carries out the reaction coproporphyrinogen III + O2 + 2 H(+) = protoporphyrinogen IX + 2 CO2 + 2 H2O. The protein operates within porphyrin-containing compound metabolism; protoporphyrin-IX biosynthesis; protoporphyrinogen-IX from coproporphyrinogen-III (O2 route): step 1/1. Involved in the heme biosynthesis. Catalyzes the aerobic oxidative decarboxylation of propionate groups of rings A and B of coproporphyrinogen-III to yield the vinyl groups in protoporphyrinogen-IX. The polypeptide is Oxygen-dependent coproporphyrinogen-III oxidase (Chromohalobacter salexigens (strain ATCC BAA-138 / DSM 3043 / CIP 106854 / NCIMB 13768 / 1H11)).